The sequence spans 1446 residues: ABC transporter G family member 53 (1446 aa).

The 274-residue stretch at 153-426 (ANTLHITPNR…FESVGFKCPE (274 aa)) folds into the ABC transporter 1 domain. 186 to 193 (GPPGAGKT) serves as a coordination point for ATP. Residues 504 to 717 (ELLKANIDRE…AQNAISVNEF (214 aa)) form the ABC transmembrane type-2 1 domain. Helical transmembrane passes span 523-543 (VYIF…TVFI), 555-575 (GGIY…NGLA), 610-630 (TPLS…VIGF), 641-661 (FLLL…IAGF), 666-686 (VVAS…GGFI), and 752-772 (IGVG…TICL). In terms of domain architecture, ABC transporter 2 spans 849–1101 (ITFEDIRYSV…ELIRYFESIE (253 aa)). 894–901 (GVSGAGKT) lines the ATP pocket. One can recognise an ABC transmembrane type-2 2 domain in the interval 1174–1388 (TQCLACLWKQ…TLYGLVTSQF (215 aa)). The next 7 helical transmembrane spans lie at 1195 to 1215 (AVKY…FWGV), 1225 to 1242 (LFNA…MGVQ), 1281 to 1301 (LPYI…MIGF), 1308 to 1328 (FFWY…YGMM), 1338 to 1358 (VASV…GFII), 1363 to 1383 (IPIW…LYGL), and 1415 to 1435 (FLWV…FLFG).

Belongs to the ABC transporter superfamily. ABCG family. PDR (TC 3.A.1.205) subfamily.

It localises to the membrane. May be a general defense protein. The sequence is that of ABC transporter G family member 53 from Oryza sativa subsp. japonica (Rice).